The following is a 301-amino-acid chain: MAATPTHFSVSHDPFSSTSLLNLQTQAIFGPNHSLKTTQLRIPASFRRKATNLQVMASGKTPGLTQEANGVAIDRQNNTDVFDDMKQRFLAFKKLKYMDDFEHYKNLADAQAPKFLVIACADSRVCPSAVLGFQPGDAFTVRNIANLVPPYESGPTETKAALEFSVNTLNVENILVIGHSRCGGIQALMKMEDEGDSRSFIHNWVVVGKKAKESTKAVASNLHFDHQCQHCEKASINHSLERLLGYPWIEEKVRQGSLSLHGGYYNFVDCTFEKWTVDYAASRGKKKEGSGIAVKDRSVWS.

The transit peptide at 1–56 directs the protein to the chloroplast; the sequence is MAATPTHFSVSHDPFSSTSLLNLQTQAIFGPNHSLKTTQLRIPASFRRKATNLQVM. A Phosphothreonine modification is found at threonine 65. Serine 128 carries the post-translational modification Phosphoserine. Cysteine 231 bears the S-nitrosocysteine mark.

This sequence belongs to the beta-class carbonic anhydrase family. Strongly expressed in aerial tissues including leaves, stems, flowers and siliques.

It is found in the plastid. It localises to the chloroplast. The catalysed reaction is hydrogencarbonate + H(+) = CO2 + H2O. Functionally, reversible hydration of carbon dioxide. The chain is Beta carbonic anhydrase 5, chloroplastic (BCA5) from Arabidopsis thaliana (Mouse-ear cress).